The sequence spans 49 residues: uncharacterized protein (49 aa).

A signal peptide spans 1–22; that stretch reads MVFLLFLSFVLSSIFLVPLVYM.

The protein localises to the secreted. This is an uncharacterized protein from Dictyostelium discoideum (Social amoeba).